The following is a 173-amino-acid chain: Adenine phosphoribosyltransferase (173 aa).

It belongs to the purine/pyrimidine phosphoribosyltransferase family. In terms of assembly, homodimer.

It localises to the cytoplasm. The enzyme catalyses AMP + diphosphate = 5-phospho-alpha-D-ribose 1-diphosphate + adenine. The protein operates within purine metabolism; AMP biosynthesis via salvage pathway; AMP from adenine: step 1/1. Its function is as follows. Catalyzes a salvage reaction resulting in the formation of AMP, that is energically less costly than de novo synthesis. In Macrococcus caseolyticus (strain JCSC5402) (Macrococcoides caseolyticum), this protein is Adenine phosphoribosyltransferase.